Consider the following 138-residue polypeptide: MYTLYILSLLCAFVTFSECKYPPGPIYPHRPIYPIQPVYPDHCPGVCYIACPNGNIHDRNGCPICRCRPDECTLPRKIGPCRASIPRYYFNFVTKRCELFFWGGCQPNKNNFETIYDCQGYCGYAERRYPYPYVKRTY.

The signal sequence occupies residues 1-19 (MYTLYILSLLCAFVTFSEC). The BPTI/Kunitz inhibitor domain maps to 72–122 (CTLPRKIGPCRASIPRYYFNFVTKRCELFFWGGCQPNKNNFETIYDCQGYC). 3 disulfide bridges follow: Cys-72-Cys-122, Cys-81-Cys-105, and Cys-97-Cys-118.

As to expression, prismatic layer of shell (at protein level). Expressed primarily in the mantle with highest level in the mantle edge and lower level in the mantle pallium.

Its subcellular location is the secreted. This is BPTI/Kunitz domain-containing protein 1 from Pinctada maxima (Silver-lipped pearl oyster).